The chain runs to 201 residues: MSRYTGPSWRISRRLGVSLSGTGKELNRRPYAPGDHGQGRRQKLSEYGTQLREKQKLRFTYGMTERQFYNLFKRAGKIKEGTHGTNFMILLERRLDNMVYRLGLATTRRQARQLVNHGHITVDGQRVDIPSYEVKIGQVISVREKSKDMAIIKGAVEAVVGRPQYVEFDADKLAGSLTRFPQREELDAELDDSLIVEYYNR.

The tract at residues G21 to K43 is disordered. In terms of domain architecture, S4 RNA-binding spans R93 to K153.

It belongs to the universal ribosomal protein uS4 family. Part of the 30S ribosomal subunit. Contacts protein S5. The interaction surface between S4 and S5 is involved in control of translational fidelity.

Functionally, one of the primary rRNA binding proteins, it binds directly to 16S rRNA where it nucleates assembly of the body of the 30S subunit. With S5 and S12 plays an important role in translational accuracy. This chain is Small ribosomal subunit protein uS4, found in Levilactobacillus brevis (strain ATCC 367 / BCRC 12310 / CIP 105137 / JCM 1170 / LMG 11437 / NCIMB 947 / NCTC 947) (Lactobacillus brevis).